Reading from the N-terminus, the 714-residue chain is Protein ESC8 (714 aa).

Disordered regions lie at residues 598 to 674 (APTG…ELHN) and 694 to 714 (RQLQ…RKGL). Positions 610–624 (TSSQRRTTVHYSSDV) are enriched in polar residues. The span at 628 to 650 (VSEESENEVDIDVSDDYDSEYLS) shows a compositional bias: acidic residues. Basic and acidic residues predominate over residues 654–674 (TLTRKGEDRTDKSFGKRELHN). The segment covering 704–714 (RSLRRNARKGL) has biased composition (basic residues).

As to quaternary structure, interacts with GAL11 and SIR2.

The protein resides in the cytoplasm. Its subcellular location is the nucleus. Functionally, involved in HMR and telomere silencing via the recruitment or stabilizing of the SIR (silent information regulators) complex. The polypeptide is Protein ESC8 (ESC8) (Saccharomyces cerevisiae (strain ATCC 204508 / S288c) (Baker's yeast)).